Here is a 306-residue protein sequence, read N- to C-terminus: UDP-N-acetylenolpyruvoylglucosamine reductase (306 aa).

The FAD-binding PCMH-type domain occupies 29–193 (RVGGPADWLF…IRASLRGTPD (165 aa)). R173 is an active-site residue. S222 (proton donor) is an active-site residue. The active site involves E292.

This sequence belongs to the MurB family. The cofactor is FAD.

Its subcellular location is the cytoplasm. It catalyses the reaction UDP-N-acetyl-alpha-D-muramate + NADP(+) = UDP-N-acetyl-3-O-(1-carboxyvinyl)-alpha-D-glucosamine + NADPH + H(+). It participates in cell wall biogenesis; peptidoglycan biosynthesis. Cell wall formation. This chain is UDP-N-acetylenolpyruvoylglucosamine reductase, found in Gluconobacter oxydans (strain 621H) (Gluconobacter suboxydans).